The chain runs to 708 residues: MATQLNDLPDVILSNIIAAVTDVRSRNSTSFVCRKWLVLERSTRVSLTLRGNVRDLFMLPTCFRSITHLDLSLISPWGHPLLSPTTPDPSLTAHLLHHAFPFVTSLVVYTRHPFTLQLLPPLWPQLKQIKLVRWHQRPQLATGDEFNMLFENCPNLSSLDLSTFYCWTDDIPTALVSHPMVASNLVTLNLLNPCFSEGFKTDEIKAITLACPNLKEFRVVCMFDPRYIGFVGDEGLVAVATNCPKLSTLHLADTSALSNSRGDINDDGFTQEDAKFGVSTLIEVFSGLPLLEELVLDVCNNVRDTGPALEILNKKCPRLRSLKLGQFHGISMPVESKLDGVALCQGLESLSIRNVGDLNDMGLIAIGRGCSRLAKFEVQGCKKITVRGMRTLASLLKKTLIDVKISCCKNLGAAYSLKALEPIQNRIQKLHIDCVWDSVEEFENLDGYGYGFDLNRRDGCEASSNFGDTFGCEEDAYLFKEKKRCKFSYDLNSLYEEVNGHGNGYSGRSWDRLQYLSLWIGVGDLLTPLTAAGLEDCPNLEEIKIRVEGDCRLWSKHSEQAFGLSTLLHYPKLSKMHLDCGDTIGYAHTAPSGQVDLSLWERFYLLGIGTLSLTELDYWPPQDMDVNQRCLSLPAAGLLQECLTLRKLFIHGTAHEHFMMFLLRIPNLRDVQLREDYYPAPENDMSTEMRADSLSRFEAALNRRPISD.

The F-box domain maps to alanine 2 to leucine 49.

In terms of assembly, part of a putative SCF (SKP1/Cullin/F-box) ubiquitin ligase complex. Interacts with DAD2. Interacts with KAI2IA in the presence of (-)-germacrene D. As to expression, mainly expressed in fully expanded leaves, lateral roots, axillary and shoot apex, and, to a lower extent, in internodes and nodes.

The protein resides in the nucleus. Component of SCF(ASK-cullin-F-box) E3 ubiquitin ligase complexes, which may mediate the ubiquitination and subsequent proteasomal degradation of target proteins. Is necessary for responses to strigolactones and may be involved in the ubiquitin-mediated degradation of specific proteins that activate axillary growth. Targets probably SMAX1A to degradation upon the formation of an E3 SCF ubiquitin ligase complex (ASK-cullin-F-box) containing MAX2A and KAI2IA in response to (-)-germacrene D in the stigma. This Petunia hybrida (Petunia) protein is F-box protein MAX2 homolog A.